The following is a 191-amino-acid chain: Large ribosomal subunit protein eL15 (191 aa).

This sequence belongs to the eukaryotic ribosomal protein eL15 family.

In Pyrobaculum aerophilum (strain ATCC 51768 / DSM 7523 / JCM 9630 / CIP 104966 / NBRC 100827 / IM2), this protein is Large ribosomal subunit protein eL15 (rpl15e).